The chain runs to 172 residues: T-cell receptor gamma chain C region C7.5 (172 aa).

Residues 1 to 140 (DKKLDADISP…QFTITSAYYT (140 aa)) are c region. Residues 141–160 (YLLLLLKSVIYLAIISFSLL) form a helical membrane-spanning segment. Topologically, residues 161 to 172 (RRTSVCCNEKKS) are cytoplasmic.

Its subcellular location is the membrane. This Mus musculus (Mouse) protein is T-cell receptor gamma chain C region C7.5.